A 359-amino-acid chain; its full sequence is 4-hydroxy-tetrahydrodipicolinate synthase, chloroplastic (359 aa).

Residues 1–33 constitute a chloroplast transit peptide; that stretch reads MSSSIIGRCHFVADSIEAAGTKRRTTRWRSPRA. Threonine 102 is a binding site for pyruvate. The Proton donor/acceptor role is filled by tyrosine 188. Lysine 216 acts as the Schiff-base intermediate with substrate in catalysis. Residue isoleucine 255 coordinates pyruvate.

This sequence belongs to the DapA family.

The protein resides in the plastid. The protein localises to the chloroplast. The enzyme catalyses L-aspartate 4-semialdehyde + pyruvate = (2S,4S)-4-hydroxy-2,3,4,5-tetrahydrodipicolinate + H2O + H(+). Its pathway is amino-acid biosynthesis; L-lysine biosynthesis via DAP pathway; (S)-tetrahydrodipicolinate from L-aspartate: step 3/4. Functionally, catalyzes the condensation of (S)-aspartate-beta-semialdehyde [(S)-ASA] and pyruvate to 4-hydroxy-tetrahydrodipicolinate (HTPA). The polypeptide is 4-hydroxy-tetrahydrodipicolinate synthase, chloroplastic (DHPS1) (Nicotiana tabacum (Common tobacco)).